Here is a 323-residue protein sequence, read N- to C-terminus: Sphingolipid delta(4)-desaturase/C4-monooxygenase DES2 (323 aa).

The N-myristoyl glycine moiety is linked to residue Gly2. The next 2 membrane-spanning stretches (helical) occupy residues 41 to 61 and 68 to 88; these read PHIK…CWLV and WLLF…TLAI. The Histidine box-1 motif lies at 89-93; sequence HDISH. Residues 95–99 are required for C4-hydroxylase activity; it reads TAFGT. The Histidine box-2 motif lies at 128–132; it reads HVDHH. A helical transmembrane segment spans residues 210–231; that stretch reads VYLLGSSLLGLGLHPISGHFVA. Positions 259–263 match the Histidine box-3 motif; that stretch reads HMEHH.

It belongs to the fatty acid desaturase type 1 family. DEGS subfamily. In terms of tissue distribution, highly expressed in intestinal crypt cells and adjacent epithelial cells (at protein level).

Its subcellular location is the endoplasmic reticulum membrane. It catalyses the reaction a dihydroceramide + 2 Fe(II)-[cytochrome b5] + O2 + 2 H(+) = a phytoceramide + 2 Fe(III)-[cytochrome b5] + H2O. The catalysed reaction is an N-acylsphinganine + 2 Fe(II)-[cytochrome b5] + O2 + 2 H(+) = an N-acylsphing-4-enine + 2 Fe(III)-[cytochrome b5] + 2 H2O. The enzyme catalyses an N-acylsphinganine + 2 Fe(II)-[cytochrome b5] + O2 + 2 H(+) = an N-acyl-(4R)-4-hydroxysphinganine + 2 Fe(III)-[cytochrome b5] + H2O. It carries out the reaction N-octanoylsphinganine + 2 Fe(II)-[cytochrome b5] + O2 + 2 H(+) = N-octanoyl-4-hydroxysphinganine + 2 Fe(III)-[cytochrome b5] + H2O. It participates in membrane lipid metabolism; sphingolipid biosynthesis. Its function is as follows. Bifunctional enzyme which acts both as a sphingolipid delta(4)-desaturase and a sphingolipid C4-monooxygenase. This chain is Sphingolipid delta(4)-desaturase/C4-monooxygenase DES2, found in Mus musculus (Mouse).